Here is a 198-residue protein sequence, read N- to C-terminus: Recombination protein RecR (198 aa).

A C4-type zinc finger spans residues Cys57–Cys72. In terms of domain architecture, Toprim spans Gly80–Pro175.

The protein belongs to the RecR family.

May play a role in DNA repair. It seems to be involved in an RecBC-independent recombinational process of DNA repair. It may act with RecF and RecO. The chain is Recombination protein RecR from Desulforudis audaxviator (strain MP104C).